An 821-amino-acid chain; its full sequence is Ent-pimara-8(14),15-diene synthase (821 aa).

Residues aspartate 556, aspartate 560, asparagine 701, threonine 705, and glutamate 709 each contribute to the Mg(2+) site. The DDXXD motif motif lies at aspartate 556–aspartate 560.

The protein belongs to the terpene synthase family. Requires Mg(2+) as cofactor. Highly expressed in roots, at intermediate levels in stems and at lower levels in leaves.

The enzyme catalyses ent-copalyl diphosphate = ent-pimara-8(14),15-diene + diphosphate. It participates in secondary metabolite biosynthesis; terpenoid biosynthesis. Its function is as follows. Involved in the biosynthesis of ent-kaurene diterpenoids natural products. Catalyzes the conversion of ent-copalyl diphosphate to ent-pimara-8(14),15-diene. This Oryza sativa subsp. japonica (Rice) protein is Ent-pimara-8(14),15-diene synthase.